A 73-amino-acid polypeptide reads, in one-letter code: Ocellatin-PT6 (73 aa).

An N-terminal signal peptide occupies residues 1–22 (MAFLKKSLFLVLFLGLVSLSIC). The propeptide occupies 23 to 39 (DEEKRQDEDDDDDDDEE).

As to expression, expressed by the skin glands.

The protein resides in the secreted. Its function is as follows. Has antibacterial activity against Gram-negative bacterium E.coli ATCC 25922 (MIC=120 uM) but not against S.pneumoniae ATCC 700603, S.choleraesuis ATCC 14028 or against Gram-positive bacterium S.aureus ATCC 29313. Shows no hemolytic activity and no cytotoxicity. This is Ocellatin-PT6 from Leptodactylus pustulatus (Ceara white-lipped frog).